Here is a 127-residue protein sequence, read N- to C-terminus: Large ribosomal subunit protein bL21 (127 aa).

It belongs to the bacterial ribosomal protein bL21 family. Part of the 50S ribosomal subunit. Contacts protein L20.

This protein binds to 23S rRNA in the presence of protein L20. The sequence is that of Large ribosomal subunit protein bL21 from Blochmanniella floridana.